We begin with the raw amino-acid sequence, 428 residues long: Serine--tRNA ligase (428 aa).

231–233 (TAE) contributes to the L-serine binding site. ATP is bound at residue 262 to 264 (RSE). E285 is an L-serine binding site. 349–352 (EISS) lines the ATP pocket. S385 lines the L-serine pocket.

Belongs to the class-II aminoacyl-tRNA synthetase family. Type-1 seryl-tRNA synthetase subfamily. In terms of assembly, homodimer. The tRNA molecule binds across the dimer.

The protein localises to the cytoplasm. The enzyme catalyses tRNA(Ser) + L-serine + ATP = L-seryl-tRNA(Ser) + AMP + diphosphate + H(+). The catalysed reaction is tRNA(Sec) + L-serine + ATP = L-seryl-tRNA(Sec) + AMP + diphosphate + H(+). The protein operates within aminoacyl-tRNA biosynthesis; selenocysteinyl-tRNA(Sec) biosynthesis; L-seryl-tRNA(Sec) from L-serine and tRNA(Sec): step 1/1. Its function is as follows. Catalyzes the attachment of serine to tRNA(Ser). Is also able to aminoacylate tRNA(Sec) with serine, to form the misacylated tRNA L-seryl-tRNA(Sec), which will be further converted into selenocysteinyl-tRNA(Sec). This chain is Serine--tRNA ligase, found in Staphylococcus aureus (strain Mu3 / ATCC 700698).